Reading from the N-terminus, the 270-residue chain is Putative phosphoenolpyruvate synthase regulatory protein (270 aa).

An ADP-binding site is contributed by 150-157; sequence GVSRCGKT.

It belongs to the pyruvate, phosphate/water dikinase regulatory protein family. PSRP subfamily.

It carries out the reaction [pyruvate, water dikinase] + ADP = [pyruvate, water dikinase]-phosphate + AMP + H(+). It catalyses the reaction [pyruvate, water dikinase]-phosphate + phosphate + H(+) = [pyruvate, water dikinase] + diphosphate. Functionally, bifunctional serine/threonine kinase and phosphorylase involved in the regulation of the phosphoenolpyruvate synthase (PEPS) by catalyzing its phosphorylation/dephosphorylation. The polypeptide is Putative phosphoenolpyruvate synthase regulatory protein (Aeromonas hydrophila subsp. hydrophila (strain ATCC 7966 / DSM 30187 / BCRC 13018 / CCUG 14551 / JCM 1027 / KCTC 2358 / NCIMB 9240 / NCTC 8049)).